Consider the following 223-residue polypeptide: MEVKDILKTVDHTLLATTATWPEIQTILDDAMAYETASACIPASYVKKAAEYVSGKLAICTVIGFPNGYSTTAAKVFECEDAIQNGADEIDMVINLTDVKNGDFDTVEEEIRQIKAKCQDHILKVIVETCQLTKEELIELCGVVTRSGADFIKTSTGFSTAGATFEDVEVMAKYVGEGVKIKAAGGISSLEDAETFIALGASRLGTSRIIKIVKNEAIKTDSY.

Residue D91 is the Proton donor/acceptor of the active site. The active-site Schiff-base intermediate with acetaldehyde is K153. K182 acts as the Proton donor/acceptor in catalysis.

It belongs to the DeoC/FbaB aldolase family. DeoC type 1 subfamily.

It localises to the cytoplasm. It catalyses the reaction 2-deoxy-D-ribose 5-phosphate = D-glyceraldehyde 3-phosphate + acetaldehyde. It functions in the pathway carbohydrate degradation; 2-deoxy-D-ribose 1-phosphate degradation; D-glyceraldehyde 3-phosphate and acetaldehyde from 2-deoxy-alpha-D-ribose 1-phosphate: step 2/2. In terms of biological role, catalyzes a reversible aldol reaction between acetaldehyde and D-glyceraldehyde 3-phosphate to generate 2-deoxy-D-ribose 5-phosphate. This chain is Deoxyribose-phosphate aldolase, found in Streptococcus pyogenes serotype M12 (strain MGAS2096).